Here is a 330-residue protein sequence, read N- to C-terminus: 5'-AMP-activated protein kinase subunit gamma-1 (330 aa).

Positions 1–21 (MESVAAESSPALENEHFQETP) are disordered. CBS domains lie at 42–102 (PTSS…KSAL), 124–186 (SFKP…PKPE), and 197–259 (IGTY…NLDV). Residues R69, 84–89 (MLTITD), V129, 150–151 (HR), and K169 each bind ADP. Residues R69, 84–89 (MLTITD), V129, H150, 150–151 (HR), K169, T199, A204, 225–226 (SA), and 241–244 (SKFD) contribute to the AMP site. Residues R69, 84–89 (MLTITD), V129, 150–151 (HR), R151, and K169 contribute to the ATP site. The short motif at 137 to 158 (LFDAVSSLIRNKIHRLPVIDPE) is the AMPK pseudosubstrate element. 241 to 244 (SKFD) contributes to the ADP binding site. 241–244 (SKFD) serves as a coordination point for ATP. S260 bears the Phosphoserine; by ULK1 mark. T262 carries the phosphothreonine; by ULK1 modification. Position 268 (R268) interacts with ADP. R268 contacts AMP. R268 contributes to the ATP binding site. S269 is modified (phosphoserine; by ULK1). The 58-residue stretch at 271-328 (YFEGVLKCYLHETLETIINRLVEAEVHRLVVVDEHDVVKGIVSLSDILQALVLTGGEK) folds into the CBS 4 domain. Residues L276 and 297 to 298 (HR) contribute to the ADP site. Residues L276, H297, 297 to 298 (HR), and 313 to 316 (SLSD) contribute to the AMP site. Residues L276 and 297 to 298 (HR) each bind ATP.

Belongs to the 5'-AMP-activated protein kinase gamma subunit family. AMPK is a heterotrimer of an alpha catalytic subunit (PRKAA1 or PRKAA2), a beta (PRKAB1 or PRKAB2) and a gamma non-catalytic subunits (PRKAG1, PRKAG2 or PRKAG3). Interacts with FNIP1 and FNIP2. Phosphorylated by ULK1 and ULK2; leading to negatively regulate AMPK activity and suggesting the existence of a regulatory feedback loop between ULK1, ULK2 and AMPK. In terms of processing, glycosylated; O-GlcNAcylated by OGT, promoting the AMP-activated protein kinase (AMPK) activity.

Its function is as follows. AMP/ATP-binding subunit of AMP-activated protein kinase (AMPK), an energy sensor protein kinase that plays a key role in regulating cellular energy metabolism. In response to reduction of intracellular ATP levels, AMPK activates energy-producing pathways and inhibits energy-consuming processes: inhibits protein, carbohydrate and lipid biosynthesis, as well as cell growth and proliferation. AMPK acts via direct phosphorylation of metabolic enzymes, and by longer-term effects via phosphorylation of transcription regulators. Also acts as a regulator of cellular polarity by remodeling the actin cytoskeleton; probably by indirectly activating myosin. Gamma non-catalytic subunit mediates binding to AMP, ADP and ATP, leading to activate or inhibit AMPK: AMP-binding results in allosteric activation of alpha catalytic subunit (PRKAA1 or PRKAA2) both by inducing phosphorylation and preventing dephosphorylation of catalytic subunits. ADP also stimulates phosphorylation, without stimulating already phosphorylated catalytic subunit. ATP promotes dephosphorylation of catalytic subunit, rendering the AMPK enzyme inactive. The chain is 5'-AMP-activated protein kinase subunit gamma-1 (Prkag1) from Mus musculus (Mouse).